The sequence spans 80 residues: Cytochrome c oxidase subunit 7A1, mitochondrial (80 aa).

Residues M1–R21 constitute a mitochondrion transit peptide. Topologically, residues L22 to G46 are mitochondrial matrix. Residues V47–S75 traverse the membrane as a helical segment. The Mitochondrial intermembrane portion of the chain corresponds to F76–K80.

The protein belongs to the cytochrome c oxidase VIIa family. As to quaternary structure, component of the complex IV (CIV, cytochrome c oxidase), a multisubunit enzyme composed of 14 subunits. The complex is composed of a catalytic core of 3 subunits MT-CO1, MT-CO2 and MT-CO3, encoded in the mitochondrial DNA, and 11 supernumerary subunits COX4I1 (or COX4I2), COX5A, COX5B, COX6A2 (or COX6A1), COX6B1 (or COX6B2), COX6C, COX7A1 (or COX7A2), COX7B, COX7C, COX8B and NDUFA4, which are encoded in the nuclear genome. The complex exists as a monomer or a dimer and forms supercomplexes (SCs) in the inner mitochondrial membrane with NADH-ubiquinone oxidoreductase (complex I, CI) and ubiquinol-cytochrome c oxidoreductase (cytochrome b-c1 complex, complex III, CIII), resulting in different assemblies (supercomplex SCI(1)III(2)IV(1) and megacomplex MCI(2)III(2)IV(2)).

It is found in the mitochondrion inner membrane. The protein operates within energy metabolism; oxidative phosphorylation. Component of the mitochondrial respiratory complex IV (CIV, also named cytochrome c oxidase complex), the last enzyme in the mitochondrial electron transport chain which drives oxidative phosphorylation. The CIV complex is the component of the respiratory chain that catalyzes the reduction of oxygen to water. Acts as an assembly factor that specifically drives the homodimerization of CIV complexes, mediating the formation of mitochondrial respiratory supercomplexes (respirasomes) containing two CIV: supercomplxes with two molecules of CIV show improved activity. Despite being highly expressed in brown adipose tissue, not required for thermogenesis. This chain is Cytochrome c oxidase subunit 7A1, mitochondrial (COX7A1), found in Saimiri sciureus (Common squirrel monkey).